Consider the following 258-residue polypeptide: D-beta-hydroxybutyrate dehydrogenase (258 aa).

8-32 (LVTGSTSGIGLGIAKALAAQGANII) is a binding site for NAD(+). S140 serves as a coordination point for substrate. Y153 acts as the Proton acceptor in catalysis.

Belongs to the short-chain dehydrogenases/reductases (SDR) family.

It carries out the reaction (R)-3-hydroxybutanoate + NAD(+) = acetoacetate + NADH + H(+). The protein is D-beta-hydroxybutyrate dehydrogenase (hbdH1) of Cupriavidus necator (strain ATCC 17699 / DSM 428 / KCTC 22496 / NCIMB 10442 / H16 / Stanier 337) (Ralstonia eutropha).